The sequence spans 480 residues: Aspartyl/glutamyl-tRNA(Asn/Gln) amidotransferase subunit B (480 aa).

Belongs to the GatB/GatE family. GatB subfamily. In terms of assembly, heterotrimer of A, B and C subunits.

The catalysed reaction is L-glutamyl-tRNA(Gln) + L-glutamine + ATP + H2O = L-glutaminyl-tRNA(Gln) + L-glutamate + ADP + phosphate + H(+). It catalyses the reaction L-aspartyl-tRNA(Asn) + L-glutamine + ATP + H2O = L-asparaginyl-tRNA(Asn) + L-glutamate + ADP + phosphate + 2 H(+). Allows the formation of correctly charged Asn-tRNA(Asn) or Gln-tRNA(Gln) through the transamidation of misacylated Asp-tRNA(Asn) or Glu-tRNA(Gln) in organisms which lack either or both of asparaginyl-tRNA or glutaminyl-tRNA synthetases. The reaction takes place in the presence of glutamine and ATP through an activated phospho-Asp-tRNA(Asn) or phospho-Glu-tRNA(Gln). The polypeptide is Aspartyl/glutamyl-tRNA(Asn/Gln) amidotransferase subunit B (Streptococcus pneumoniae serotype 4 (strain ATCC BAA-334 / TIGR4)).